Reading from the N-terminus, the 328-residue chain is Gonadotropin-releasing hormone receptor (328 aa).

Residues 1 to 38 lie on the Extracellular side of the membrane; that stretch reads MANSDSPEQNENHCSSINSSIPLTPGSLPTLTLSGKIR. The N-linked (GlcNAc...) asparagine glycan is linked to N18. Residues 39–58 traverse the membrane as a helical segment; sequence VTVTFFLFLLSTIFNTSFLL. Residues 59–77 lie on the Cytoplasmic side of the membrane; that stretch reads KLQNWTQRKEKRKKLSRMK. The chain crosses the membrane as a helical span at residues 78–97; the sequence is LLLKHLTLANLLETLIVMPL. Over 98-115 the chain is Extracellular; it reads DGMWNITVQWYAGELLCK. Residue N102 is glycosylated (N-linked (GlcNAc...) asparagine). Cysteines 114 and 196 form a disulfide. A helical transmembrane segment spans residues 116–137; that stretch reads VLSYLKLFSMYAPAFMMVVISL. The Cytoplasmic segment spans residues 138–164; the sequence is DRSLAITKPLAVKSNSKLGQFMIGLAW. A helical membrane pass occupies residues 165–184; it reads LLSSIFAGPQLYIFGMIHLA. Residues 185 to 212 are Extracellular-facing; it reads DDSGQTEGFSQCVTHCSFPQWWHQAFYN. The chain crosses the membrane as a helical span at residues 213–232; sequence FFTFSCLFIIPLLIMVICNA. At 233-281 the chain is on the cytoplasmic side; that stretch reads KIIFTLTRVLHQDPHKLQLNQSKNNIPRARLRTLKMTVAFATSFTVCWT. The helical transmembrane segment at 282-300 threads the bilayer; that stretch reads PYYVLGIWYWFDPDMVNRV. At 301 to 306 the chain is on the extracellular side; that stretch reads SDPVNH. Residues 307 to 326 form a helical membrane-spanning segment; the sequence is FFFLFAFLNPCFNPLIYGYF. The Cytoplasmic portion of the chain corresponds to 327-328; it reads SL.

It belongs to the G-protein coupled receptor 1 family.

Its subcellular location is the cell membrane. In terms of biological role, receptor for gonadotropin releasing hormone (GnRH) that mediates the action of GnRH to stimulate the secretion of the gonadotropic hormones luteinizing hormone (LH) and follicle-stimulating hormone (FSH). This receptor mediates its action by association with G-proteins that activate a phosphatidylinositol-calcium second messenger system. The polypeptide is Gonadotropin-releasing hormone receptor (GNRHR) (Bos mutus grunniens (Wild yak)).